The following is a 316-amino-acid chain: KRR1 small subunit processome component (316 aa).

The region spanning 122 to 192 (ACDVIKIGNF…VRRVVEDCMK (71 aa)) is the KH domain. The segment covering 279–304 (KKLNEQKEKQMEREIERQEERAKDFI) has biased composition (basic and acidic residues). Residues 279–316 (KKLNEQKEKQMEREIERQEERAKDFIAPEEEAYKPNQN) form a disordered region.

Belongs to the KRR1 family. As to quaternary structure, component of the ribosomal small subunit (SSU) processome composed of at least 40 protein subunits and snoRNA U3. Interacts with snoRNA U3. Interacts with MPP10, KRI1 and with ribosomal proteins RPS1A, RPS4A, RPS4B, RPS8A, RPS8B, RPS11A, RPS11B, RPS13, RPS24, RPS25, RPL4A, RPL7B, RPL8, RPL23, RPL25 and RPL28.

Its subcellular location is the nucleus. The protein localises to the nucleolus. Required for 40S ribosome biogenesis. Involved in nucleolar processing of pre-18S ribosomal RNA and ribosome assembly. Essential for vegetative growth. In Saccharomyces cerevisiae (strain RM11-1a) (Baker's yeast), this protein is KRR1 small subunit processome component.